A 301-amino-acid polypeptide reads, in one-letter code: Heme A synthase (301 aa).

Residues 1 to 7 (MHKGLKR) lie on the Cytoplasmic side of the membrane. The chain crosses the membrane as a helical span at residues 8–28 (LGVITSLGVLLVLIQGALVTN). Over 29–56 (TGSGEGCGQTWPLCFGQVIPLDPPPETV) the chain is Extracellular. A disulfide bridge connects residues Cys-35 and Cys-42. Residues 57–77 (IEFSHRLVAGIVGMLVILMAI) traverse the membrane as a helical segment. Glu-58 is a catalytic residue. His-61 lines the heme o pocket. Topologically, residues 78–92 (WSWRRLKHMPETRFL) are cytoplasmic. Residues 93 to 113 (AVISVFMIIFQGLLGAGAVVF) form a helical membrane-spanning segment. The Extracellular portion of the chain corresponds to 114-117 (GQSD). A helical transmembrane segment spans residues 118–138 (LIMALHFGFSALSFASVVLLT). Residue His-123 coordinates heme o. The Cytoplasmic segment spans residues 139–159 (RLAFEDSNPQKQYAPIVSKAY). Residues 160-180 (KGYVIFVAIYSYVAIYTGAYV) traverse the membrane as a helical segment. Residues 181-215 (KHTNATLACSGFPLCNGQWVPDVFTEAIGVQLLHR) are Extracellular-facing. The cysteines at positions 189 and 195 are disulfide-linked. Residue His-214 participates in heme b binding. Residues 216–236 (SAAILLSLLLLVLFIWTVKTF) traverse the membrane as a helical segment. The Cytoplasmic portion of the chain corresponds to 237–240 (RASR). Residues 241-261 (VLVVCASLAMLLVIGQAASGV) form a helical membrane-spanning segment. At 262–274 (AVVLTYNATLTLG) the chain is on the extracellular side. The chain crosses the membrane as a helical span at residues 275 to 295 (IFHALLISLLFTLLCYMVMLV). A heme b-binding site is contributed by His-277. Topologically, residues 296 to 301 (TRHKAK) are cytoplasmic.

This sequence belongs to the COX15/CtaA family. Type 1 subfamily. In terms of assembly, interacts with CtaB. Heme b is required as a cofactor.

It is found in the cell membrane. It catalyses the reaction Fe(II)-heme o + 2 A + H2O = Fe(II)-heme a + 2 AH2. It participates in porphyrin-containing compound metabolism; heme A biosynthesis; heme A from heme O: step 1/1. Its function is as follows. Catalyzes the conversion of heme O to heme A by two successive hydroxylations of the methyl group at C8. The first hydroxylation forms heme I, the second hydroxylation results in an unstable dihydroxymethyl group, which spontaneously dehydrates, resulting in the formyl group of heme A. The protein is Heme A synthase of Shouchella clausii (strain KSM-K16) (Alkalihalobacillus clausii).